Consider the following 331-residue polypeptide: Probable allantoicase (331 aa).

It belongs to the allantoicase family.

It carries out the reaction allantoate + H2O = (S)-ureidoglycolate + urea. It functions in the pathway nitrogen metabolism; (S)-allantoin degradation; (S)-ureidoglycolate from allantoate (aminidohydrolase route): step 1/1. In Pseudomonas syringae pv. tomato (strain ATCC BAA-871 / DC3000), this protein is Probable allantoicase.